We begin with the raw amino-acid sequence, 298 residues long: ATP synthase gamma chain (298 aa).

It belongs to the ATPase gamma chain family. In terms of assembly, F-type ATPases have 2 components, CF(1) - the catalytic core - and CF(0) - the membrane proton channel. CF(1) has five subunits: alpha(3), beta(3), gamma(1), delta(1), epsilon(1). CF(0) has three main subunits: a, b and c.

Its subcellular location is the cell inner membrane. Functionally, produces ATP from ADP in the presence of a proton gradient across the membrane. The gamma chain is believed to be important in regulating ATPase activity and the flow of protons through the CF(0) complex. The protein is ATP synthase gamma chain of Francisella tularensis subsp. tularensis (strain WY96-3418).